The chain runs to 220 residues: 2-hydroxy-3-keto-5-methylthiopentenyl-1-phosphate phosphatase (220 aa).

The protein belongs to the HAD-like hydrolase superfamily. MtnX family.

The enzyme catalyses 2-hydroxy-5-methylsulfanyl-3-oxopent-1-enyl phosphate + H2O = 1,2-dihydroxy-5-(methylsulfanyl)pent-1-en-3-one + phosphate. It functions in the pathway amino-acid biosynthesis; L-methionine biosynthesis via salvage pathway; L-methionine from S-methyl-5-thio-alpha-D-ribose 1-phosphate: step 4/6. Functionally, dephosphorylates 2-hydroxy-3-keto-5-methylthiopentenyl-1-phosphate (HK-MTPenyl-1-P) yielding 1,2-dihydroxy-3-keto-5-methylthiopentene (DHK-MTPene). In Geobacillus kaustophilus (strain HTA426), this protein is 2-hydroxy-3-keto-5-methylthiopentenyl-1-phosphate phosphatase.